The following is a 309-amino-acid chain: MVKVYAPASIGNVSVGFDVLGAAVSPVNGELLGDCVTVEAAAEFSLTNTGRFVSKLPAEPRENIAWQCWERFCQEIGKTVPVAMTLEKNMPIGSGLGSSACSVVAGLMAMNEFCGKPLSDDRLLTLMGELEGRISGSIHYDNVAPCFLGGLQLMLEENNIISQPVPCFDEWLWVMAYPGIKVSTAEARAILPAQYRRQDCISHGRYLAGFIHACHTRQPQLAAKLMRDVIAEPYRTKLLPGFSEARQAALETGALACGISGSGPTLFAVCDKTDTAQRVAEWLKQHYLQNQEGFVHICRLDTAGARVLG.

91 to 101 (PIGSGLGSSAC) provides a ligand contact to ATP.

It belongs to the GHMP kinase family. Homoserine kinase subfamily.

Its subcellular location is the cytoplasm. It carries out the reaction L-homoserine + ATP = O-phospho-L-homoserine + ADP + H(+). It participates in amino-acid biosynthesis; L-threonine biosynthesis; L-threonine from L-aspartate: step 4/5. Functionally, catalyzes the ATP-dependent phosphorylation of L-homoserine to L-homoserine phosphate. The sequence is that of Homoserine kinase from Cronobacter sakazakii (strain ATCC BAA-894) (Enterobacter sakazakii).